The following is a 1181-amino-acid chain: WD repeat-containing protein 35 (1181 aa).

WD repeat units lie at residues Pro12–Lys51, Gly69–Glu108, Arg113–Lys152, Leu154–Met193, and Gly502–Lys539.

Component of the IFT complex A (IFT-A) complex. IFT-A complex is divided into a core subcomplex composed of IFT122:IFT140:WDR19 which is associated with TULP3 and a peripheral subcomplex composed of IFT43:WDR35:TTC21B. Interacts directy with IFT122, ITF43 and TTC21B. Interacts with IFT43. Interacts with CFAP61.

The protein resides in the cytoplasm. It localises to the cytoskeleton. The protein localises to the microtubule organizing center. Its subcellular location is the centrosome. It is found in the cilium axoneme. The protein resides in the cilium basal body. As a component of the IFT complex A (IFT-A), a complex required for retrograde ciliary transport and entry into cilia of G protein-coupled receptors (GPCRs), it is involved in ciliogenesis and ciliary protein trafficking. May promote CASP3 activation and TNF-stimulated apoptosis. The sequence is that of WD repeat-containing protein 35 from Mus musculus (Mouse).